The following is a 419-amino-acid chain: Thymidine phosphorylase (419 aa).

Belongs to the thymidine/pyrimidine-nucleoside phosphorylase family. Homodimer.

The catalysed reaction is thymidine + phosphate = 2-deoxy-alpha-D-ribose 1-phosphate + thymine. The enzymes which catalyze the reversible phosphorolysis of pyrimidine nucleosides are involved in the degradation of these compounds and in their utilization as carbon and energy sources, or in the rescue of pyrimidine bases for nucleotide synthesis. The protein is Thymidine phosphorylase (deoA) of Mycoplasmoides pirum (Mycoplasma pirum).